Here is a 223-residue protein sequence, read N- to C-terminus: Coiled-coil domain-containing protein 70 (223 aa).

Residues 129 to 153 (NALWERDRNLLQEDKALWEEEKALW) are a coiled coil. A disordered region spans residues 199–223 (EQRHQNGPYNANEEPQSTSFPRGRA). The span at 203–223 (QNGPYNANEEPQSTSFPRGRA) shows a compositional bias: polar residues.

This chain is Coiled-coil domain-containing protein 70, found in Mus musculus (Mouse).